A 169-amino-acid polypeptide reads, in one-letter code: Ribosome-binding factor A (169 aa).

The interval 124-169 (AGAKHAGDADPYKSDIPEDVEIDEDDFDEEDEDLIDDEELDEDGNK) is disordered. Basic and acidic residues predominate over residues 128–139 (HAGDADPYKSDI). A compositionally biased stretch (acidic residues) spans 140 to 169 (PEDVEIDEDDFDEEDEDLIDDEELDEDGNK).

It belongs to the RbfA family. As to quaternary structure, monomer. Binds 30S ribosomal subunits, but not 50S ribosomal subunits or 70S ribosomes.

It is found in the cytoplasm. In terms of biological role, one of several proteins that assist in the late maturation steps of the functional core of the 30S ribosomal subunit. Associates with free 30S ribosomal subunits (but not with 30S subunits that are part of 70S ribosomes or polysomes). Required for efficient processing of 16S rRNA. May interact with the 5'-terminal helix region of 16S rRNA. The chain is Ribosome-binding factor A from Arthrobacter sp. (strain FB24).